The sequence spans 392 residues: MSLREITSPDEIRDTRSFSHLEWGAFLSIDDYNHREEIVLGHTPMCKNRLKSWGLYIEDGTRVAACETLERPALVQCKDGKIKSTSTFSIGAVFTPKEHRGKGYASVMMKQMASGIPFKPTLTDADIIKATGVSDVDQTLRVTPLWSDVGTFYEKFGWIGTTDLQYVFEVDGSASQNGVNGTPNGTNGTNGVNGHTNGTNGHSSAVKYLSEEDVYRLADVEASSFASDFEKFPFKGSYKCGIVPDRTVYEWHLARAKFLAKFAKVPEPKVFGAQIGDSWMAWHHMYNARELVILRAKLAKAEDLVELIAAAKNHLCKDGFSDQINKIILWEQEREWNHIVDGLSYDAIDQAIEKSQGKREHRGSSIPAVMFVEYKLQKDAMEFVDHGKLTWC.

The catalysed reaction is L-lysine + acetyl-CoA = N(6)-acetyl-L-lysine + CoA + H(+). Its pathway is amino-acid degradation; L-lysine degradation via acetylation pathway; glutarate from L-lysine: step 1/6. With respect to regulation, activity is inhibited by 5-aminovalerate. Its function is as follows. Lysine N-6-acetyl transferase (LAT) that catalyzes the first step of the lysine degradation pathway. This chain is Lysine acetyltransferase, found in Yarrowia lipolytica (strain CLIB 122 / E 150) (Yeast).